Consider the following 263-residue polypeptide: Uroplakin-3b-like protein 1 (263 aa).

Residues Met-1–Pro-33 form the signal peptide. Residues Gly-34–Val-204 lie on the Extracellular side of the membrane. Residues Asn-51, Asn-76, and Asn-91 are each glycosylated (N-linked (GlcNAc...) asparagine). Residues Ile-205–Ile-225 form a helical membrane-spanning segment. Residues Tyr-226–Ser-263 lie on the Cytoplasmic side of the membrane.

This sequence belongs to the uroplakin-3 family.

It localises to the membrane. The protein is Uroplakin-3b-like protein 1 of Homo sapiens (Human).